The following is a 752-amino-acid chain: Zinc finger protein 425 (752 aa).

In terms of domain architecture, KRAB spans 9 to 80 (VTFDDVALYF…EQGCLDKTRR (72 aa)). C2H2-type zinc fingers lie at residues 190 to 212 (YSCYVCRKVFQVRRDLLKHKRSH), 246 to 268 (FQCSECEKSYFLKGSLVTHQVVH), 274 to 296 (YPCPECDKTFRYRANLKKHLCLH), 302 to 324 (FCCGECGRAFVQQCELTEHLRLH), 330 to 352 (FQCPQCDRCFRLKRGMKVHLTQH), 358 to 380 (FHCPECGRSFSRKAALKTHQRTH), 386 to 408 (FSCGECGRKFIYKIKLDEHIRVH), 414 to 436 (FSCPECNKSFRLKRSLKAHGLQH), 442 to 464 (FQCPECSRGFFWRNAMRAHQRLH), 470 to 492 (FPCAECGKRFTRPSKLACHTRVH), 498 to 520 (FPCGECKKTFSQQSRLTQHLKVH), 526 to 548 (FSCAECGRSFRRRAHLTEHTRLH), 554 to 576 (FQCPECDKSFSWKASMKFHQRMH), 582 to 604 (FACGECDKTYTHQSQLTEHLRLH), 610 to 632 (YQCPECEKTFRLKGNLKSHLLQH), 638 to 660 (FSCVMCGKSFTQQYRLTEHIRVH), 666 to 688 (FQCPECDKSYCIRGSLKVHLYKH), 694 to 716 (FQCPECGKGFLQKRSLKAHLCLH), and 722 to 744 (FSCDECGRSFTYVGALKTHIAVH).

This sequence belongs to the krueppel C2H2-type zinc-finger protein family.

It localises to the nucleus. Its subcellular location is the cytoplasm. In terms of biological role, acts as a transcriptional repressor. In Homo sapiens (Human), this protein is Zinc finger protein 425 (ZNF425).